Here is a 76-residue protein sequence, read N- to C-terminus: Acyl carrier protein (76 aa).

The Carrier domain occupies 2–76 (SDIAERVKKI…QAIDYIQSHT (75 aa)). O-(pantetheine 4'-phosphoryl)serine is present on Ser36.

This sequence belongs to the acyl carrier protein (ACP) family. Post-translationally, 4'-phosphopantetheine is transferred from CoA to a specific serine of apo-ACP by AcpS. This modification is essential for activity because fatty acids are bound in thioester linkage to the sulfhydryl of the prosthetic group.

It localises to the cytoplasm. Its pathway is lipid metabolism; fatty acid biosynthesis. Functionally, carrier of the growing fatty acid chain in fatty acid biosynthesis. The protein is Acyl carrier protein of Methylococcus capsulatus (strain ATCC 33009 / NCIMB 11132 / Bath).